The following is a 295-amino-acid chain: MAGTARGCGTSLDLLRSLPRVSLANLKPSPNSRKRERRPRDRRRGRKCGRGHKGERQRGTRPRLGFEGGQTPFYIRIPKYGFNEGHSFRHQYQPLSLRRLQYLIDLGRVDPTQPIDLTQLVNGRGVTIQPLKRDYGVQLVEEGADTFQAKINIEVQLASELAIAAIEKNGGVVTTAFYDPRSLEILCKPIPFFLRGQPIPKRMLPPESLVPYYTDAKNRGYLADPAKFPEARLELAMKFGYVLPDITKDELFRMLSARKDPRQIFFGLAPGWVVNMADKKILKPTDENLLKYYSS.

Residues 1-20 (MAGTARGCGTSLDLLRSLPR) constitute a mitochondrion transit peptide. The tract at residues 21–67 (VSLANLKPSPNSRKRERRPRDRRRGRKCGRGHKGERQRGTRPRLGFE) is disordered. The span at 32–51 (SRKRERRPRDRRRGRKCGRG) shows a compositional bias: basic residues.

Belongs to the universal ribosomal protein uL15 family. Component of the mitochondrial ribosome large subunit (39S) which comprises a 16S rRNA and about 50 distinct proteins.

The protein resides in the mitochondrion. This chain is Large ribosomal subunit protein uL15m (Mrpl15), found in Mus musculus (Mouse).